A 187-amino-acid polypeptide reads, in one-letter code: Protein GrpE (187 aa).

The tract at residues 1–22 (MADEQNLDAQAQDQAAEAGAGD) is disordered. Positions 7 to 22 (LDAQAQDQAAEAGAGD) are enriched in low complexity.

This sequence belongs to the GrpE family. As to quaternary structure, homodimer.

Its subcellular location is the cytoplasm. Participates actively in the response to hyperosmotic and heat shock by preventing the aggregation of stress-denatured proteins, in association with DnaK and GrpE. It is the nucleotide exchange factor for DnaK and may function as a thermosensor. Unfolded proteins bind initially to DnaJ; upon interaction with the DnaJ-bound protein, DnaK hydrolyzes its bound ATP, resulting in the formation of a stable complex. GrpE releases ADP from DnaK; ATP binding to DnaK triggers the release of the substrate protein, thus completing the reaction cycle. Several rounds of ATP-dependent interactions between DnaJ, DnaK and GrpE are required for fully efficient folding. The polypeptide is Protein GrpE (Pseudomonas syringae pv. tomato (strain ATCC BAA-871 / DC3000)).